Consider the following 297-residue polypeptide: Sirohydrochlorin cobaltochelatase CbiKP (297 aa).

An N-terminal signal peptide occupies residues 1 to 28 (MSRHPMVTRLLCLVFSCLIILACSPAFA). His124 provides a ligand contact to heme. His182 functions as the Proton acceptor in the catalytic mechanism. Co(2+)-binding residues include His182, Glu212, and His244.

It belongs to the CbiK family. In terms of assembly, homotetramer; dimer of dimers.

Its subcellular location is the periplasm. The enzyme catalyses Co-sirohydrochlorin + 2 H(+) = sirohydrochlorin + Co(2+). It catalyses the reaction siroheme + 2 H(+) = sirohydrochlorin + Fe(2+). Functionally, catalyzes the insertion of Co(2+) into sirohydrochlorin. To a lesser extent, is also able to insert Fe(2+) into sirohydrochlorin, yielding siroheme. Its periplasmic location means that it cannot participate in cobalamin biosynthesis and its genomic environment suggests it is likely to be associated with a heme or metal transport system. The polypeptide is Sirohydrochlorin cobaltochelatase CbiKP (cbiKp) (Nitratidesulfovibrio vulgaris (strain ATCC 29579 / DSM 644 / CCUG 34227 / NCIMB 8303 / VKM B-1760 / Hildenborough) (Desulfovibrio vulgaris)).